Consider the following 130-residue polypeptide: Small ribosomal subunit protein uS8 (130 aa).

The protein belongs to the universal ribosomal protein uS8 family. In terms of assembly, part of the 30S ribosomal subunit. Contacts proteins S5 and S12.

One of the primary rRNA binding proteins, it binds directly to 16S rRNA central domain where it helps coordinate assembly of the platform of the 30S subunit. The protein is Small ribosomal subunit protein uS8 of Ruegeria pomeroyi (strain ATCC 700808 / DSM 15171 / DSS-3) (Silicibacter pomeroyi).